The sequence spans 242 residues: Ubiquinone biosynthesis O-methyltransferase (242 aa).

Positions 44, 64, 85, and 129 each coordinate S-adenosyl-L-methionine.

Belongs to the methyltransferase superfamily. UbiG/COQ3 family.

It catalyses the reaction a 3-demethylubiquinol + S-adenosyl-L-methionine = a ubiquinol + S-adenosyl-L-homocysteine + H(+). The catalysed reaction is a 3-(all-trans-polyprenyl)benzene-1,2-diol + S-adenosyl-L-methionine = a 2-methoxy-6-(all-trans-polyprenyl)phenol + S-adenosyl-L-homocysteine + H(+). The protein operates within cofactor biosynthesis; ubiquinone biosynthesis. O-methyltransferase that catalyzes the 2 O-methylation steps in the ubiquinone biosynthetic pathway. This is Ubiquinone biosynthesis O-methyltransferase from Yersinia pseudotuberculosis serotype O:1b (strain IP 31758).